We begin with the raw amino-acid sequence, 445 residues long: Tubulin beta chain (445 aa).

GTP is bound by residues Gln11, Glu69, Ser138, Gly142, Thr143, Gly144, Asn205, and Asn227. Mg(2+) is bound at residue Glu69.

The protein belongs to the tubulin family. As to quaternary structure, dimer of alpha and beta chains. A typical microtubule is a hollow water-filled tube with an outer diameter of 25 nm and an inner diameter of 15 nM. Alpha-beta heterodimers associate head-to-tail to form protofilaments running lengthwise along the microtubule wall with the beta-tubulin subunit facing the microtubule plus end conferring a structural polarity. Microtubules usually have 13 protofilaments but different protofilament numbers can be found in some organisms and specialized cells. Requires Mg(2+) as cofactor.

The protein localises to the cytoplasm. It localises to the cytoskeleton. In terms of biological role, tubulin is the major constituent of microtubules, a cylinder consisting of laterally associated linear protofilaments composed of alpha- and beta-tubulin heterodimers. Microtubules grow by the addition of GTP-tubulin dimers to the microtubule end, where a stabilizing cap forms. Below the cap, tubulin dimers are in GDP-bound state, owing to GTPase activity of alpha-tubulin. This Ajellomyces capsulatus (Darling's disease fungus) protein is Tubulin beta chain (TUB2).